Here is a 311-residue protein sequence, read N- to C-terminus: Homoserine kinase (311 aa).

Residue 88–98 (PEGLGLGSSGA) participates in ATP binding.

The protein belongs to the GHMP kinase family. Homoserine kinase subfamily.

It is found in the cytoplasm. The enzyme catalyses L-homoserine + ATP = O-phospho-L-homoserine + ADP + H(+). It participates in amino-acid biosynthesis; L-threonine biosynthesis; L-threonine from L-aspartate: step 4/5. Catalyzes the ATP-dependent phosphorylation of L-homoserine to L-homoserine phosphate. In Saccharolobus solfataricus (strain ATCC 35092 / DSM 1617 / JCM 11322 / P2) (Sulfolobus solfataricus), this protein is Homoserine kinase.